The chain runs to 96 residues: Cytochrome c oxidase assembly factor 3 homolog, mitochondrial (96 aa).

Over 1-50 (MSSQGEPKPEAQFAKRIDPTKEALTKEQLQFIRQVEMAQWKKKTDKLRGR) the chain is Mitochondrial matrix. The helical transmembrane segment at 51-73 (NVATGLAIGAVVLGIYGYTFYSV) threads the bilayer. The Mitochondrial intermembrane segment spans residues 74–96 (SQEKIMDEIDEEAKVRVPKTGAN).

It belongs to the COA3 family. In terms of assembly, core component of the MITRAC (mitochondrial translation regulation assembly intermediate of cytochrome c oxidase complex) complex.

The protein localises to the mitochondrion inner membrane. Core component of the MITRAC (mitochondrial translation regulation assembly intermediate of cytochrome c oxidase complex) complex, that regulates cytochrome c oxidase assembly. MITRAC complexes regulate both translation of mitochondrial encoded components and assembly of nuclear-encoded components imported in mitochondrion. Required for efficient translation of MT-CO1 and mitochondrial respiratory chain complex IV assembly. The chain is Cytochrome c oxidase assembly factor 3 homolog, mitochondrial (coa3a) from Danio rerio (Zebrafish).